The chain runs to 103 residues: G0/G1 switch protein 2 (103 aa).

In terms of assembly, directly interacts with BCL2; this interaction prevents the formation of the anti-apoptotic BAX-BCL2 complex.

It localises to the mitochondrion. Its function is as follows. Promotes apoptosis by binding to BCL2, hence preventing the formation of protective BCL2-BAX heterodimers. This chain is G0/G1 switch protein 2 (G0s2), found in Mus musculus (Mouse).